The sequence spans 383 residues: Galactokinase (383 aa).

Substrate is bound at residue 34 to 37 (EHTD). 124–130 (GAGLSSS) is a binding site for ATP. Ser-130 and Glu-162 together coordinate Mg(2+). Residue Asp-174 is the Proton acceptor of the active site. Position 223 (Tyr-223) interacts with substrate.

This sequence belongs to the GHMP kinase family. GalK subfamily.

It localises to the cytoplasm. It carries out the reaction alpha-D-galactose + ATP = alpha-D-galactose 1-phosphate + ADP + H(+). The protein operates within carbohydrate metabolism; galactose metabolism. In terms of biological role, catalyzes the transfer of the gamma-phosphate of ATP to D-galactose to form alpha-D-galactose-1-phosphate (Gal-1-P). This chain is Galactokinase, found in Yersinia pseudotuberculosis serotype IB (strain PB1/+).